The following is a 210-amino-acid chain: Ovomucoid (210 aa).

The N-terminal stretch at Met1–Gly24 is a signal peptide. Kazal-like domains are found at residues Ala25–Glu88, Thr89–Lys153, and Ala156–Cys210. 3 disulfides stabilise this stretch: Cys29–Cys68, Cys46–Cys65, and Cys54–Cys86. The N-linked (GlcNAc...) asparagine glycan is linked to Asn34. N-linked (GlcNAc...) asparagine glycans are attached at residues Asn77, Asn93, and Asn99. Disulfide bonds link Cys94–Cys133, Cys111–Cys130, Cys119–Cys151, Cys162–Cys192, Cys170–Cys189, and Cys178–Cys210. Asn199 is a glycosylation site (N-linked (GlcNAc...) asparagine; partial).

Its subcellular location is the secreted. Its function is as follows. Serine protease inhibitor. Inhibits trypsin. In Gallus gallus (Chicken), this protein is Ovomucoid.